Reading from the N-terminus, the 286-residue chain is 4-hydroxy-tetrahydrodipicolinate synthase (286 aa).

Residue T42 coordinates pyruvate. Residue Y129 is the Proton donor/acceptor of the active site. K157 (schiff-base intermediate with substrate) is an active-site residue. I196 provides a ligand contact to pyruvate.

This sequence belongs to the DapA family. Homotetramer; dimer of dimers.

It is found in the cytoplasm. It carries out the reaction L-aspartate 4-semialdehyde + pyruvate = (2S,4S)-4-hydroxy-2,3,4,5-tetrahydrodipicolinate + H2O + H(+). Its pathway is amino-acid biosynthesis; L-lysine biosynthesis via DAP pathway; (S)-tetrahydrodipicolinate from L-aspartate: step 3/4. Its function is as follows. Catalyzes the condensation of (S)-aspartate-beta-semialdehyde [(S)-ASA] and pyruvate to 4-hydroxy-tetrahydrodipicolinate (HTPA). This is 4-hydroxy-tetrahydrodipicolinate synthase from Chlamydia trachomatis serovar A (strain ATCC VR-571B / DSM 19440 / HAR-13).